Here is a 309-residue protein sequence, read N- to C-terminus: MRLPRITKFALYRENPCLLPLYHATRDPSLAKREWTWICKELKLLYPEISKHGLRKKIVNACQLRARNYPLQYILKSQPFGNIKIDCQQGVLIPRWETEEWVERVVDKLNRLERLKPLKILDLCTGSGCISSFVLANLRVPHTIEAVDVSKKALKLAVKNCDRAIAHGTVGKINFHQIDVLNEHERVESLLQTSHVLLCNPPYISDDDFAAQTDISVRKYEPKLALLAKNGGNEFYYKFSQYIKRMLQRNAKDFVPLSLIVFEIGSTHQAKIVKSLFDDTNWQANIEQDGAHQDRVVIITRKDRRLIDI.

S-adenosyl-L-methionine-binding positions include 124-128, aspartate 148, and asparagine 200; that span reads CTGSG. 200–203 is a substrate binding site; sequence NPPY.

Belongs to the protein N5-glutamine methyltransferase family.

It localises to the mitochondrion. It catalyses the reaction L-glutaminyl-[peptide chain release factor] + S-adenosyl-L-methionine = N(5)-methyl-L-glutaminyl-[peptide chain release factor] + S-adenosyl-L-homocysteine + H(+). Functionally, methylates MRF1 on 'Gln-270' using S-adenosyl L-methionine as methyl donor. The polypeptide is Probable MRF1 mitochondrial N(5)-glutamine methyltransferase mtq1 (mtq1) (Schizosaccharomyces pombe (strain 972 / ATCC 24843) (Fission yeast)).